Here is a 944-residue protein sequence, read N- to C-terminus: Lactoferrin-binding protein A (944 aa).

The signal sequence occupies residues 1 to 27; sequence MNKKHGFSLTLTALAIAAAFPSYAANP. Residues 52-178 enclose the TBDR plug domain; it reads RRSKEATGLG…LGGAVAFRTK (127 aa). In terms of domain architecture, TBDR beta-barrel spans 189-944; it reads SWGIQAKTAY…NFSLALEMKF (756 aa). The short motif at 927-944 is the TonB C-terminal box element; the sequence is GRYAAPGRNFSLALEMKF.

Belongs to the TonB-dependent receptor family.

The protein resides in the cell outer membrane. Its function is as follows. Unknown. May be an iron-siderophore receptor. The chain is Lactoferrin-binding protein A (lbpA) from Neisseria meningitidis serogroup A / serotype 4A (strain DSM 15465 / Z2491).